The primary structure comprises 289 residues: Tumor necrosis factor receptor superfamily member 5 (289 aa).

Positions 1–19 (MVSLPRLCALWGCLLTAVH) are cleaved as a signal peptide. Topologically, residues 20–193 (LGQCVTCSDK…VICGLKSRMR (174 aa)) are extracellular. TNFR-Cys repeat units follow at residues 25–60 (TCSD…TQCH), 61–103 (PCDS…DTVC), 104–144 (TCKE…TVCH), and 145–187 (PCPV…VICG). 8 disulfide bridges follow: C26–C37, C38–C51, C41–C59, C62–C77, C83–C103, C105–C119, C111–C116, and C125–C143. N-linked (GlcNAc...) asparagine glycosylation is present at N153. A helical membrane pass occupies residues 194–215 (ALLVIPVVMGILITIFGVFLYI). Residues 216–289 (KKVVKKPKDN…TDSIALRPLV (74 aa)) lie on the Cytoplasmic side of the membrane. Positions 228 to 251 (LPPAARRQDPQEMEDYPGHNTAAP) are disordered.

As to quaternary structure, monomer and homodimer. Interacts with TRAF1, TRAF2 and TRAF6. Interacts with TRAF3 and TRAF5. Interacts with TRAF6 and MAP3K8; the interaction is required for ERK activation.

The protein resides in the cell membrane. It is found in the secreted. Functionally, receptor for TNFSF5/CD40LG. Transduces TRAF6- and MAP3K8-mediated signals that activate ERK in macrophages and B cells, leading to induction of immunoglobulin secretion. The protein is Tumor necrosis factor receptor superfamily member 5 (Cd40) of Mus musculus (Mouse).